A 143-amino-acid polypeptide reads, in one-letter code: Transcriptional regulator MraZ (143 aa).

SpoVT-AbrB domains are found at residues 5 to 47 (QYEH…SLEE) and 76 to 119 (AVEC…SKEV).

It belongs to the MraZ family. Forms oligomers.

Its subcellular location is the cytoplasm. The protein resides in the nucleoid. The sequence is that of Transcriptional regulator MraZ from Thermoanaerobacter sp. (strain X514).